The chain runs to 376 residues: Histidinol dehydrogenase (376 aa).

The NAD(+) site is built by Tyr100 and Asn182. Substrate contacts are provided by Ser205, Gln227, and His230. Positions 227 and 230 each coordinate Zn(2+). Active-site proton acceptor residues include Glu275 and His276. The substrate site is built by His276, Asp309, Glu363, and His368. Asp309 serves as a coordination point for Zn(2+). Zn(2+) is bound at residue His368.

It belongs to the histidinol dehydrogenase family. It depends on Zn(2+) as a cofactor.

The enzyme catalyses L-histidinol + 2 NAD(+) + H2O = L-histidine + 2 NADH + 3 H(+). It participates in amino-acid biosynthesis; L-histidine biosynthesis; L-histidine from 5-phospho-alpha-D-ribose 1-diphosphate: step 9/9. Functionally, catalyzes the sequential NAD-dependent oxidations of L-histidinol to L-histidinaldehyde and then to L-histidine. This Thermococcus kodakarensis (strain ATCC BAA-918 / JCM 12380 / KOD1) (Pyrococcus kodakaraensis (strain KOD1)) protein is Histidinol dehydrogenase.